We begin with the raw amino-acid sequence, 216 residues long: 4-hydroxy-tetrahydrodipicolinate reductase (216 aa).

Residues 9–12, 71–73, and 95–98 contribute to the NAD(+) site; these read SGRM, GTT, and AYNF. The Proton donor/acceptor role is filled by His-127. Residue His-128 participates in (S)-2,3,4,5-tetrahydrodipicolinate binding. Lys-131 is an NAD(+) binding site. The Proton donor role is filled by Lys-131. 137–138 contributes to the (S)-2,3,4,5-tetrahydrodipicolinate binding site; that stretch reads GT.

The protein belongs to the DapB family. Homotetramer.

It is found in the cytoplasm. The enzyme catalyses (S)-2,3,4,5-tetrahydrodipicolinate + NAD(+) + H2O = (2S,4S)-4-hydroxy-2,3,4,5-tetrahydrodipicolinate + NADH + H(+). It catalyses the reaction (S)-2,3,4,5-tetrahydrodipicolinate + NADP(+) + H2O = (2S,4S)-4-hydroxy-2,3,4,5-tetrahydrodipicolinate + NADPH + H(+). It participates in amino-acid biosynthesis; L-lysine biosynthesis via DAP pathway; (S)-tetrahydrodipicolinate from L-aspartate: step 4/4. With respect to regulation, is inhibited by high concentrations of NADH. In terms of biological role, catalyzes the conversion of 4-hydroxy-tetrahydrodipicolinate (HTPA) to tetrahydrodipicolinate. Uses NADPH as a reductant with much more efficiency than NADH. In Thermotoga maritima (strain ATCC 43589 / DSM 3109 / JCM 10099 / NBRC 100826 / MSB8), this protein is 4-hydroxy-tetrahydrodipicolinate reductase.